The primary structure comprises 158 residues: MPKETGRKLIAQNKRARHDYDILDTYEAGLVLMGTEVKALRAGRASLVDGFAQIADGEIWLHNVHIPEYTEGTWTNHAPRRRRKLLLHRAEIEKLIGKTREGGLTVVPLSLYFKDGRAKVEIALARGRKNYDKRHALAERDAAREMSRIMGRQAKGRV.

Belongs to the SmpB family.

It localises to the cytoplasm. Its function is as follows. Required for rescue of stalled ribosomes mediated by trans-translation. Binds to transfer-messenger RNA (tmRNA), required for stable association of tmRNA with ribosomes. tmRNA and SmpB together mimic tRNA shape, replacing the anticodon stem-loop with SmpB. tmRNA is encoded by the ssrA gene; the 2 termini fold to resemble tRNA(Ala) and it encodes a 'tag peptide', a short internal open reading frame. During trans-translation Ala-aminoacylated tmRNA acts like a tRNA, entering the A-site of stalled ribosomes, displacing the stalled mRNA. The ribosome then switches to translate the ORF on the tmRNA; the nascent peptide is terminated with the 'tag peptide' encoded by the tmRNA and targeted for degradation. The ribosome is freed to recommence translation, which seems to be the essential function of trans-translation. The protein is SsrA-binding protein of Parafrankia sp. (strain EAN1pec).